A 107-amino-acid chain; its full sequence is Ig kappa chain V-VI region NQ2-48.2.2 (107 aa).

The segment at 1 to 23 (QILLTQSPAIMSASPGQKVTMTC) is framework-1. C23 and C87 are oxidised to a cystine. The complementarity-determining-1 stretch occupies residues 24-33 (SASSSVSYMH). A framework-2 region spans residues 34-48 (WYQQKSGTSPKRWIY). The segment at 49-55 (DTSKLAS) is complementarity-determining-2. The interval 56-87 (GVPARFSGSGSATSYSLTITSMQAEDAATYYC) is framework-3. The tract at residues 88 to 96 (QQWSSNPLT) is complementarity-determining-3. The tract at residues 97-106 (FGAGTKLXLK) is framework-4.

Its function is as follows. Anti-2-phenyl oxazolone (PHOX) Antibody. The sequence is that of Ig kappa chain V-VI region NQ2-48.2.2 from Mus musculus (Mouse).